A 167-amino-acid chain; its full sequence is Small ribosomal subunit protein uS5 (167 aa).

The S5 DRBM domain occupies 12 to 75; the sequence is LQEKLIAVNR…EKARRNMTTI (64 aa).

The protein belongs to the universal ribosomal protein uS5 family. As to quaternary structure, part of the 30S ribosomal subunit. Contacts proteins S4 and S8.

In terms of biological role, with S4 and S12 plays an important role in translational accuracy. Its function is as follows. Located at the back of the 30S subunit body where it stabilizes the conformation of the head with respect to the body. The chain is Small ribosomal subunit protein uS5 from Vibrio parahaemolyticus serotype O3:K6 (strain RIMD 2210633).